A 103-amino-acid chain; its full sequence is Protein IQ-DOMAIN 20 (103 aa).

A calmodulin-binding region spans residues 10–22 (VVRRKLLRRSQSR). IQ domains lie at 36–62 (EEIA…LKSL) and 63–87 (VKLQ…CMHA).

Belongs to the IQD family. As to quaternary structure, interacts with calmodulin (CaM and CML) at the plasma membrane in a calcium ion Ca(2+)- independent manner, however, Ca(2+) seems to modulate calmodulin binding. Binds to multiple calmodulin (CaM) in the presence of Ca(2+) and CaM-like proteins.

It is found in the nucleus. The protein resides in the nucleolus. Its subcellular location is the cell membrane. Its function is as follows. May be involved in cooperative interactions with calmodulins or calmodulin-like proteins. Recruits calmodulin proteins to microtubules, thus being a potential scaffold in cellular signaling and trafficking. May associate with nucleic acids and regulate gene expression at the transcriptional or post-transcriptional level. This is Protein IQ-DOMAIN 20 from Arabidopsis thaliana (Mouse-ear cress).